The sequence spans 368 residues: Ubiquitin domain-containing protein UBFD1 (368 aa).

A disordered region spans residues 106-139 (SCDARGNLQPAPAQPPGDPAAQASVSNGEDAGGG). Residues 143-218 (ELVDLKIIWN…IMVVGSTIND (76 aa)) enclose the Ubiquitin-like domain. A disordered region spans residues 231–263 (QDAKAEENKKEPLCRQKQHRKVLDKGKPEDVMP). Composition is skewed to basic and acidic residues over residues 233-244 (AKAEENKKEPLC) and 251-260 (KVLDKGKPED).

The chain is Ubiquitin domain-containing protein UBFD1 (Ubfd1) from Mus musculus (Mouse).